The chain runs to 29 residues: Cyclotide vibi-B (29 aa).

The segment at residues 1-29 (GLPVCGETCFGGTCNTPGCTCSYPICTRN) is a cross-link (cyclopeptide (Gly-Asn)). Cystine bridges form between Cys-5–Cys-19, Cys-9–Cys-21, and Cys-14–Cys-26.

This is a cyclic peptide.

In terms of biological role, probably participates in a plant defense mechanism. This is Cyclotide vibi-B from Viola biflora (Yellow wood violet).